Consider the following 116-residue polypeptide: MTLRAIGESSPPPRSACNSSQLIFLVVNLKVPAVGLELFLLVWESWLTYSIKESSLNVDRKDLAFKPPVFAVKCESLTLCWLRQLFLSGVSLFIEYSKSLSNKSTRPPCSPIAGYA.

The chain crosses the membrane as a helical span at residues 22 to 42 (LIFLVVNLKVPAVGLELFLLV).

It is found in the membrane. This is an uncharacterized protein from Saccharomyces cerevisiae (strain ATCC 204508 / S288c) (Baker's yeast).